The following is an 807-amino-acid chain: uncharacterized protein (807 aa).

One can recognise a Reverse transcriptase domain in the interval 281-566 (IIQSLKSEEF…DKILFLGTNI (286 aa)).

Its subcellular location is the mitochondrion. This is an uncharacterized protein from Schizosaccharomyces pombe (strain 972 / ATCC 24843) (Fission yeast).